A 421-amino-acid polypeptide reads, in one-letter code: Phosphoglycerate kinase, cytosolic (421 aa).

Positions 23, 24, 25, 26, 39, 61, 62, 64, 65, 135, 172, and 173 each coordinate (2R)-3-phosphoglycerate. Positions 218 and 219 each coordinate ADP. Gly218 provides a ligand contact to CDP. The AMP site is built by Ala219 and Lys220. Ala219 contributes to the ATP binding site. Ala219 is a Mg(2+) binding site. Lys220 contributes to the (2R)-3-phosphoglycerate binding site. Asp223 contacts CDP. Position 223 (Asp223) interacts with Mg(2+). Residues Lys224 and Gly242 each coordinate ADP. Lys224 provides a ligand contact to AMP. Lys224 contacts ATP. Gly242 provides a ligand contact to CDP. The AMP site is built by Ala243 and Ala315. Residues Ala243 and Ala315 each coordinate ATP. Residues Ala315 and Asn339 each contribute to the ADP site. Residues Gly340 and Phe345 each coordinate CDP. Residues Phe345, Glu346, Asp378, and Ser379 each coordinate ADP. Glu346 serves as a coordination point for AMP. 3 residues coordinate ATP: Glu346, Asp378, and Ser379. Residue Asp378 coordinates Mg(2+).

The protein belongs to the phosphoglycerate kinase family. In terms of assembly, monomer. Mg(2+) is required as a cofactor.

It localises to the cytoplasm. The enzyme catalyses (2R)-3-phosphoglycerate + ATP = (2R)-3-phospho-glyceroyl phosphate + ADP. It participates in carbohydrate degradation; glycolysis; pyruvate from D-glyceraldehyde 3-phosphate: step 2/5. The polypeptide is Phosphoglycerate kinase, cytosolic (Trypanosoma brucei brucei).